A 199-amino-acid chain; its full sequence is Small ribosomal subunit protein uS4 (199 aa).

One can recognise an S4 RNA-binding domain in the interval 91–151; the sequence is SRLDNLVYRF…EKSKNVKAIA (61 aa).

It belongs to the universal ribosomal protein uS4 family. In terms of assembly, part of the 30S ribosomal subunit. Contacts protein S5. The interaction surface between S4 and S5 is involved in control of translational fidelity.

Its function is as follows. One of the primary rRNA binding proteins, it binds directly to 16S rRNA where it nucleates assembly of the body of the 30S subunit. Functionally, with S5 and S12 plays an important role in translational accuracy. The protein is Small ribosomal subunit protein uS4 of Exiguobacterium sp. (strain ATCC BAA-1283 / AT1b).